The primary structure comprises 1078 residues: Carbamoyl phosphate synthase large chain (1078 aa).

Positions 1 to 401 (MARQPLVSSV…ALQKAVRGLE (401 aa)) are carboxyphosphate synthetic domain. 12 residues coordinate ATP: arginine 129, arginine 169, glycine 175, glycine 176, arginine 208, leucine 210, glutamate 215, glycine 241, valine 242, histidine 243, glutamine 284, and glutamate 298. The region spanning 133-327 (KELLLEIGEP…IARIAAKLAI (195 aa)) is the ATP-grasp 1 domain. Mg(2+) is bound by residues glutamine 284, glutamate 298, and asparagine 300. Mn(2+)-binding residues include glutamine 284, glutamate 298, and asparagine 300. The tract at residues 402 to 546 (TDQTDLTWED…YATYEDENEA (145 aa)) is oligomerization domain. The interval 547–935 (PPLDSPKAVV…ALAKAFLAAG (389 aa)) is carbamoyl phosphate synthetic domain. One can recognise an ATP-grasp 2 domain in the interval 677-867 (ERFLHELGIP…MVDVATQILL (191 aa)). The ATP site is built by arginine 713, lysine 752, leucine 754, glutamate 758, glycine 783, valine 784, histidine 785, serine 786, glutamine 826, and glutamate 838. Glutamine 826, glutamate 838, and asparagine 840 together coordinate Mg(2+). Mn(2+)-binding residues include glutamine 826, glutamate 838, and asparagine 840. The region spanning 936-1078 (LAIERGAPVL…AYRTREAVLA (143 aa)) is the MGS-like domain. Residues 936-1078 (LAIERGAPVL…AYRTREAVLA (143 aa)) form an allosteric domain region.

The protein belongs to the CarB family. Composed of two chains; the small (or glutamine) chain promotes the hydrolysis of glutamine to ammonia, which is used by the large (or ammonia) chain to synthesize carbamoyl phosphate. Tetramer of heterodimers (alpha,beta)4. It depends on Mg(2+) as a cofactor. Mn(2+) serves as cofactor.

The catalysed reaction is hydrogencarbonate + L-glutamine + 2 ATP + H2O = carbamoyl phosphate + L-glutamate + 2 ADP + phosphate + 2 H(+). The enzyme catalyses hydrogencarbonate + NH4(+) + 2 ATP = carbamoyl phosphate + 2 ADP + phosphate + 2 H(+). Its pathway is amino-acid biosynthesis; L-arginine biosynthesis; carbamoyl phosphate from bicarbonate: step 1/1. The protein operates within pyrimidine metabolism; UMP biosynthesis via de novo pathway; (S)-dihydroorotate from bicarbonate: step 1/3. Functionally, large subunit of the glutamine-dependent carbamoyl phosphate synthetase (CPSase). CPSase catalyzes the formation of carbamoyl phosphate from the ammonia moiety of glutamine, carbonate, and phosphate donated by ATP, constituting the first step of 2 biosynthetic pathways, one leading to arginine and/or urea and the other to pyrimidine nucleotides. The large subunit (synthetase) binds the substrates ammonia (free or transferred from glutamine from the small subunit), hydrogencarbonate and ATP and carries out an ATP-coupled ligase reaction, activating hydrogencarbonate by forming carboxy phosphate which reacts with ammonia to form carbamoyl phosphate. In Thermomicrobium roseum (strain ATCC 27502 / DSM 5159 / P-2), this protein is Carbamoyl phosphate synthase large chain.